Here is a 253-residue protein sequence, read N- to C-terminus: Phosphate import ATP-binding protein PstB (253 aa).

One can recognise an ABC transporter domain in the interval 7–248 (MHSKGLDFFY…PGNKQTEDYI (242 aa)). Residue 39-46 (GPSGCGKS) participates in ATP binding.

The protein belongs to the ABC transporter superfamily. Phosphate importer (TC 3.A.1.7) family. As to quaternary structure, the complex is composed of two ATP-binding proteins (PstB), two transmembrane proteins (PstC and PstA) and a solute-binding protein (PstS).

The protein localises to the cell inner membrane. It carries out the reaction phosphate(out) + ATP + H2O = ADP + 2 phosphate(in) + H(+). Functionally, part of the ABC transporter complex PstSACB involved in phosphate import. Responsible for energy coupling to the transport system. This Oleidesulfovibrio alaskensis (strain ATCC BAA-1058 / DSM 17464 / G20) (Desulfovibrio alaskensis) protein is Phosphate import ATP-binding protein PstB.